Here is a 377-residue protein sequence, read N- to C-terminus: Molybdenum import ATP-binding protein ModC (377 aa).

The ABC transporter domain maps to Ile17 to Asp254. Gly52–Thr59 contributes to the ATP binding site. In terms of domain architecture, Mop spans Asp313–Arg377.

This sequence belongs to the ABC transporter superfamily. Molybdate importer (TC 3.A.1.8) family. In terms of assembly, the complex is composed of two ATP-binding proteins (ModC), two transmembrane proteins (ModB) and a solute-binding protein (ModA).

It localises to the cell inner membrane. It carries out the reaction molybdate(out) + ATP + H2O = molybdate(in) + ADP + phosphate + H(+). Its function is as follows. Part of the ABC transporter complex ModABC involved in molybdenum import. Responsible for energy coupling to the transport system. In Aromatoleum aromaticum (strain DSM 19018 / LMG 30748 / EbN1) (Azoarcus sp. (strain EbN1)), this protein is Molybdenum import ATP-binding protein ModC.